A 396-amino-acid polypeptide reads, in one-letter code: S-arrestin (396 aa).

This sequence belongs to the arrestin family.

In terms of biological role, arrestin is one of the major proteins of the ros (retinal rod outer segments); it binds to photoactivated-phosphorylated rhodopsin, thereby apparently preventing the transducin-mediated activation of phosphodiesterase. In Aquarana catesbeiana (American bullfrog), this protein is S-arrestin.